The sequence spans 454 residues: Noelin-2 (454 aa).

An N-terminal signal peptide occupies residues methionine 1 to glycine 20. Coiled-coil stretches lie at residues arginine 58–arginine 85 and leucine 136–leucine 193. 6 N-linked (GlcNAc...) asparagine glycosylation sites follow: asparagine 74, asparagine 155, asparagine 275, asparagine 310, asparagine 399, and asparagine 441. Residues glycine 194 to histidine 446 enclose the Olfactomedin-like domain. A disulfide bridge links cysteine 195 with cysteine 377.

As to quaternary structure, peripherally associated with AMPAR complex. AMPAR complex consists of an inner core made of 4 pore-forming GluA/GRIA proteins (GRIA1, GRIA2, GRIA3 and GRIA4) and 4 major auxiliary subunits arranged in a twofold symmetry. One of the two pairs of distinct binding sites is occupied either by CNIH2, CNIH3 or CACNG2, CACNG3. The other harbors CACNG2, CACNG3, CACNG4, CACNG8 or GSG1L. This inner core of AMPAR complex is complemented by outer core constituents binding directly to the GluA/GRIA proteins at sites distinct from the interaction sites of the inner core constituents. Outer core constituents include at least PRRT1, PRRT2, CKAMP44/SHISA9, FRRS1L and NRN1. The proteins of the inner and outer core serve as a platform for other, more peripherally associated AMPAR constituents, including OLFM2. Alone or in combination, these auxiliary subunits control the gating and pharmacology of the AMPAR complex and profoundly impact their biogenesis and protein processing. Interacts with GRIA2. Interacts with OLFM1 and OLFM3. Interacts with SRF; the interaction promotes dissociation of SRF from the transcriptional repressor HEY2. Interacts with RUNX2. N-glycosylated. As to expression, expressed in aortic smooth muscle (at protein level). In the fetus, expressed in the brain and ocular tissues including lens vesicle and optic cup.

Its subcellular location is the secreted. It is found in the synapse. The protein resides in the membrane. It localises to the nucleus. The protein localises to the cytoplasm. Involved in transforming growth factor beta (TGF-beta)-induced smooth muscle differentiation. TGF-beta induces expression and translocation of OLFM2 to the nucleus where it binds to SRF, causing its dissociation from the transcriptional repressor HEY2/HERP1 and facilitating binding of SRF to target genes. Plays a role in AMPAR complex organization. Is a regulator of vascular smooth-muscle cell (SMC) phenotypic switching, that acts by promoting RUNX2 and inhibiting MYOCD binding to SRF. SMC phenotypic switching is the process through which vascular SMCs undergo transition between a quiescent contractile phenotype and a proliferative synthetic phenotype in response to pathological stimuli. SMC phenotypic plasticity is essential for vascular development and remodeling. This is Noelin-2 (OLFM2) from Homo sapiens (Human).